A 139-amino-acid polypeptide reads, in one-letter code: Protein LTO1 homolog (139 aa).

Belongs to the LTO1 family.

The sequence is that of Protein LTO1 homolog from Dictyostelium discoideum (Social amoeba).